The primary structure comprises 472 residues: Adenosylhomocysteinase (472 aa).

Substrate contacts are provided by Thr-62, Asp-137, and Glu-197. Position 198-200 (198-200) interacts with NAD(+); sequence TTT. Substrate contacts are provided by Lys-227 and Asp-231. Residues Asn-232, 261-266, Glu-284, Asn-319, 340-342, and Asn-385 contribute to the NAD(+) site; these read GYGDVG and IGH.

It belongs to the adenosylhomocysteinase family. The cofactor is NAD(+).

The protein localises to the cytoplasm. It carries out the reaction S-adenosyl-L-homocysteine + H2O = L-homocysteine + adenosine. The protein operates within amino-acid biosynthesis; L-homocysteine biosynthesis; L-homocysteine from S-adenosyl-L-homocysteine: step 1/1. In terms of biological role, may play a key role in the regulation of the intracellular concentration of adenosylhomocysteine. The sequence is that of Adenosylhomocysteinase from Bordetella bronchiseptica (strain ATCC BAA-588 / NCTC 13252 / RB50) (Alcaligenes bronchisepticus).